A 437-amino-acid chain; its full sequence is UDP-N-acetylmuramate--L-alanine ligase (437 aa).

Residue 108 to 114 (GAHGKTS) coordinates ATP.

This sequence belongs to the MurCDEF family.

It is found in the cytoplasm. The catalysed reaction is UDP-N-acetyl-alpha-D-muramate + L-alanine + ATP = UDP-N-acetyl-alpha-D-muramoyl-L-alanine + ADP + phosphate + H(+). It functions in the pathway cell wall biogenesis; peptidoglycan biosynthesis. Its function is as follows. Cell wall formation. This Staphylococcus aureus protein is UDP-N-acetylmuramate--L-alanine ligase.